Here is a 301-residue protein sequence, read N- to C-terminus: NAD kinase (301 aa).

Asp-73 (proton acceptor) is an active-site residue. Residues 73-74 (DG), 151-152 (ND), Arg-179, Asp-181, 192-197 (TAYALS), Ala-216, and Gln-250 contribute to the NAD(+) site.

The protein belongs to the NAD kinase family. A divalent metal cation serves as cofactor.

It is found in the cytoplasm. It carries out the reaction NAD(+) + ATP = ADP + NADP(+) + H(+). Its function is as follows. Involved in the regulation of the intracellular balance of NAD and NADP, and is a key enzyme in the biosynthesis of NADP. Catalyzes specifically the phosphorylation on 2'-hydroxyl of the adenosine moiety of NAD to yield NADP. This Methylibium petroleiphilum (strain ATCC BAA-1232 / LMG 22953 / PM1) protein is NAD kinase.